The sequence spans 341 residues: UDP-3-O-acylglucosamine N-acyltransferase (341 aa).

His240 serves as the catalytic Proton acceptor.

The protein belongs to the transferase hexapeptide repeat family. LpxD subfamily. In terms of assembly, homotrimer.

The enzyme catalyses a UDP-3-O-[(3R)-3-hydroxyacyl]-alpha-D-glucosamine + a (3R)-hydroxyacyl-[ACP] = a UDP-2-N,3-O-bis[(3R)-3-hydroxyacyl]-alpha-D-glucosamine + holo-[ACP] + H(+). Its pathway is bacterial outer membrane biogenesis; LPS lipid A biosynthesis. Catalyzes the N-acylation of UDP-3-O-acylglucosamine using 3-hydroxyacyl-ACP as the acyl donor. Is involved in the biosynthesis of lipid A, a phosphorylated glycolipid that anchors the lipopolysaccharide to the outer membrane of the cell. The chain is UDP-3-O-acylglucosamine N-acyltransferase from Cellvibrio japonicus (strain Ueda107) (Pseudomonas fluorescens subsp. cellulosa).